Reading from the N-terminus, the 475-residue chain is Sulfate adenylyltransferase subunit 1 (475 aa).

One can recognise a tr-type G domain in the interval 25–239 (KSLLRFLTCG…EVLETVEIQR (215 aa)). The segment at 34–41 (GSVDDGKS) is G1. A GTP-binding site is contributed by 34-41 (GSVDDGKS). Residues 92-96 (GITID) form a G2 region. Positions 113–116 (DTPG) are G3. GTP is bound by residues 113–117 (DTPGH) and 168–171 (NKMD). The tract at residues 168–171 (NKMD) is G4. The G5 stretch occupies residues 206–208 (SAL).

The protein belongs to the TRAFAC class translation factor GTPase superfamily. Classic translation factor GTPase family. CysN/NodQ subfamily. Heterodimer composed of CysD, the smaller subunit, and CysN.

The catalysed reaction is sulfate + ATP + H(+) = adenosine 5'-phosphosulfate + diphosphate. The protein operates within sulfur metabolism; hydrogen sulfide biosynthesis; sulfite from sulfate: step 1/3. With CysD forms the ATP sulfurylase (ATPS) that catalyzes the adenylation of sulfate producing adenosine 5'-phosphosulfate (APS) and diphosphate, the first enzymatic step in sulfur assimilation pathway. APS synthesis involves the formation of a high-energy phosphoric-sulfuric acid anhydride bond driven by GTP hydrolysis by CysN coupled to ATP hydrolysis by CysD. In Escherichia coli O139:H28 (strain E24377A / ETEC), this protein is Sulfate adenylyltransferase subunit 1.